The chain runs to 194 residues: uncharacterized protein (194 aa).

This is an uncharacterized protein from Methanocaldococcus jannaschii (strain ATCC 43067 / DSM 2661 / JAL-1 / JCM 10045 / NBRC 100440) (Methanococcus jannaschii).